Consider the following 340-residue polypeptide: Dihydroorotate dehydrogenase (quinone) (340 aa).

Residues 65 to 69 (AGLDK) and Thr-89 each bind FMN. Lys-69 contributes to the substrate binding site. Substrate is bound at residue 114-118 (NRMGF). FMN is bound by residues Asn-142 and Asn-175. Asn-175 serves as a coordination point for substrate. Residue Ser-178 is the Nucleophile of the active site. Residue Asn-180 participates in substrate binding. Positions 220 and 248 each coordinate FMN. Substrate is bound at residue 249–250 (NT). FMN-binding positions include Gly-271, Gly-300, and 321-322 (YT).

This sequence belongs to the dihydroorotate dehydrogenase family. Type 2 subfamily. Monomer. It depends on FMN as a cofactor.

It localises to the cell membrane. The enzyme catalyses (S)-dihydroorotate + a quinone = orotate + a quinol. It participates in pyrimidine metabolism; UMP biosynthesis via de novo pathway; orotate from (S)-dihydroorotate (quinone route): step 1/1. Its function is as follows. Catalyzes the conversion of dihydroorotate to orotate with quinone as electron acceptor. The protein is Dihydroorotate dehydrogenase (quinone) of Paraburkholderia xenovorans (strain LB400).